A 205-amino-acid chain; its full sequence is Transcription termination/antitermination protein NusG (205 aa).

In terms of domain architecture, KOW spans 154-178; the sequence is GDHIMVLSGPFKDFEGDVIEVSPER.

It belongs to the NusG family.

Its function is as follows. Participates in transcription elongation, termination and antitermination. The polypeptide is Transcription termination/antitermination protein NusG (Synechocystis sp. (strain ATCC 27184 / PCC 6803 / Kazusa)).